The sequence spans 371 residues: Aurora kinase (371 aa).

Composition is skewed to polar residues over residues 1–15 (MSMKQLETSMSSVSL) and 48–80 (RISTTQPQTYYRPTNLTKTPASQVSRRSSYTTD). The disordered stretch occupies residues 1 to 84 (MSMKQLETSM…SSYTTDPPSP (84 aa)). The 252-residue stretch at 99 to 350 (FEIGKALGKG…LKDMHKHPWI (252 aa)) folds into the Protein kinase domain. ATP contacts are provided by residues 105–113 (LGKGKFGKV) and K128. D222 serves as the catalytic Proton acceptor.

This sequence belongs to the protein kinase superfamily. Ser/Thr protein kinase family. Aurora subfamily.

The protein localises to the nucleus. It localises to the cytoplasm. It is found in the cytoskeleton. Its subcellular location is the spindle. The protein resides in the chromosome. The protein localises to the centromere. It localises to the kinetochore. It carries out the reaction L-seryl-[protein] + ATP = O-phospho-L-seryl-[protein] + ADP + H(+). The catalysed reaction is L-threonyl-[protein] + ATP = O-phospho-L-threonyl-[protein] + ADP + H(+). Functionally, component of the chromosomal passenger complex (CPC), a complex that acts as a key regulator of chromosome segregation and cytokinesis. Has a role in error-correction of aberrent kinetochore-microtubule attachments to ensure that sister kinetochores become bioriented and connect to opposite poles by promoting spindle assembly checkpoint signaling. This is Aurora kinase (IPL1) from Yarrowia lipolytica (strain CLIB 122 / E 150) (Yeast).